Consider the following 429-residue polypeptide: Serine hydroxymethyltransferase (429 aa).

(6S)-5,6,7,8-tetrahydrofolate is bound by residues L126 and 130–132; that span reads GHL. Residue K235 is modified to N6-(pyridoxal phosphate)lysine. Residue 359–361 coordinates (6S)-5,6,7,8-tetrahydrofolate; that stretch reads SPF.

This sequence belongs to the SHMT family. As to quaternary structure, homodimer. Pyridoxal 5'-phosphate serves as cofactor.

Its subcellular location is the cytoplasm. The catalysed reaction is (6R)-5,10-methylene-5,6,7,8-tetrahydrofolate + glycine + H2O = (6S)-5,6,7,8-tetrahydrofolate + L-serine. It functions in the pathway one-carbon metabolism; tetrahydrofolate interconversion. Its pathway is amino-acid biosynthesis; glycine biosynthesis; glycine from L-serine: step 1/1. Functionally, catalyzes the reversible interconversion of serine and glycine with tetrahydrofolate (THF) serving as the one-carbon carrier. This reaction serves as the major source of one-carbon groups required for the biosynthesis of purines, thymidylate, methionine, and other important biomolecules. Also exhibits THF-independent aldolase activity toward beta-hydroxyamino acids, producing glycine and aldehydes, via a retro-aldol mechanism. In Prochlorococcus marinus (strain MIT 9313), this protein is Serine hydroxymethyltransferase.